The sequence spans 464 residues: Soluble pyridine nucleotide transhydrogenase (464 aa).

FAD is bound at residue 35-44 (DSRRQVGGNC).

Belongs to the class-I pyridine nucleotide-disulfide oxidoreductase family. It depends on FAD as a cofactor.

It localises to the cytoplasm. It catalyses the reaction NAD(+) + NADPH = NADH + NADP(+). In terms of biological role, conversion of NADPH, generated by peripheral catabolic pathways, to NADH, which can enter the respiratory chain for energy generation. This Pseudomonas fluorescens (strain Pf0-1) protein is Soluble pyridine nucleotide transhydrogenase.